The primary structure comprises 124 residues: Small ribosomal subunit protein uS12 (124 aa).

Asp89 carries the 3-methylthioaspartic acid modification. Residues Leu102–Ser124 are disordered. Positions Asn109–Ser124 are enriched in basic residues.

The protein belongs to the universal ribosomal protein uS12 family. Part of the 30S ribosomal subunit. Contacts proteins S8 and S17. May interact with IF1 in the 30S initiation complex.

Its function is as follows. With S4 and S5 plays an important role in translational accuracy. Functionally, interacts with and stabilizes bases of the 16S rRNA that are involved in tRNA selection in the A site and with the mRNA backbone. Located at the interface of the 30S and 50S subunits, it traverses the body of the 30S subunit contacting proteins on the other side and probably holding the rRNA structure together. The combined cluster of proteins S8, S12 and S17 appears to hold together the shoulder and platform of the 30S subunit. The polypeptide is Small ribosomal subunit protein uS12 (Francisella tularensis subsp. novicida (strain U112)).